Here is a 332-residue protein sequence, read N- to C-terminus: D-2-hydroxyacid dehydrogenase (NAD(+)) (332 aa).

Catalysis depends on residues Arg-237 and Glu-266. His-298 serves as the catalytic Proton donor.

The protein belongs to the D-isomer specific 2-hydroxyacid dehydrogenase family. In terms of assembly, monomer.

It carries out the reaction a (2R)-2-hydroxycarboxylate + NAD(+) = a 2-oxocarboxylate + NADH + H(+). The catalysed reaction is (2R)-hydroxy-4-methylpentanoate + NAD(+) = 4-methyl-2-oxopentanoate + NADH + H(+). It functions in the pathway amino-acid degradation; L-leucine degradation. Involved in the reductive branch of L-leucine fermentation. Catalyzes the NADH-dependent reduction of 4-methyl-2-oxopentanoate (2-oxoisocaproate) to (R)-2-hydroxy-4-methylpentanoate ((R)-2-hydroxyisocaproate). For the reverse reaction, the enzyme accepts (R)- but not (S)-2-hydroxy-4-methylpentanoate. Can also use 2-oxopentanoate, 2-oxohexanoate and phenylpyruvate but not 2-oxoisovalerate and 2-oxobutyrate. Cannot use NADPH. The chain is D-2-hydroxyacid dehydrogenase (NAD(+)) from Clostridioides difficile (Peptoclostridium difficile).